Consider the following 383-residue polypeptide: 1-deoxy-D-xylulose 5-phosphate reductoisomerase (383 aa).

Threonine 10, glycine 11, serine 12, isoleucine 13, asparagine 38, and asparagine 121 together coordinate NADPH. Lysine 122 contributes to the 1-deoxy-D-xylulose 5-phosphate binding site. An NADPH-binding site is contributed by glutamate 123. Aspartate 147 is a Mn(2+) binding site. Residues serine 148, glutamate 149, serine 172, and histidine 195 each contribute to the 1-deoxy-D-xylulose 5-phosphate site. Glutamate 149 is a Mn(2+) binding site. Residue glycine 201 participates in NADPH binding. The 1-deoxy-D-xylulose 5-phosphate site is built by serine 208, asparagine 213, lysine 214, and glutamate 217. Residue glutamate 217 coordinates Mn(2+).

Belongs to the DXR family. Mg(2+) is required as a cofactor. Requires Mn(2+) as cofactor.

It carries out the reaction 2-C-methyl-D-erythritol 4-phosphate + NADP(+) = 1-deoxy-D-xylulose 5-phosphate + NADPH + H(+). Its pathway is isoprenoid biosynthesis; isopentenyl diphosphate biosynthesis via DXP pathway; isopentenyl diphosphate from 1-deoxy-D-xylulose 5-phosphate: step 1/6. Catalyzes the NADPH-dependent rearrangement and reduction of 1-deoxy-D-xylulose-5-phosphate (DXP) to 2-C-methyl-D-erythritol 4-phosphate (MEP). The sequence is that of 1-deoxy-D-xylulose 5-phosphate reductoisomerase from Vesicomyosocius okutanii subsp. Calyptogena okutanii (strain HA).